The primary structure comprises 432 residues: 3-phosphoshikimate 1-carboxyvinyltransferase (432 aa).

The 3-phosphoshikimate site is built by K25, S26, and R30. K25 is a phosphoenolpyruvate binding site. The phosphoenolpyruvate site is built by G97 and R125. Residues S170, Q172, D318, and K345 each coordinate 3-phosphoshikimate. Q172 is a phosphoenolpyruvate binding site. D318 (proton acceptor) is an active-site residue. R349 and R393 together coordinate phosphoenolpyruvate.

This sequence belongs to the EPSP synthase family. In terms of assembly, monomer.

The protein resides in the cytoplasm. It carries out the reaction 3-phosphoshikimate + phosphoenolpyruvate = 5-O-(1-carboxyvinyl)-3-phosphoshikimate + phosphate. It functions in the pathway metabolic intermediate biosynthesis; chorismate biosynthesis; chorismate from D-erythrose 4-phosphate and phosphoenolpyruvate: step 6/7. Catalyzes the transfer of the enolpyruvyl moiety of phosphoenolpyruvate (PEP) to the 5-hydroxyl of shikimate-3-phosphate (S3P) to produce enolpyruvyl shikimate-3-phosphate and inorganic phosphate. The protein is 3-phosphoshikimate 1-carboxyvinyltransferase of Geobacillus thermodenitrificans (strain NG80-2).